The chain runs to 300 residues: Acetylglutamate kinase (300 aa).

Substrate-binding positions include G68–G69, R90, and N195.

It belongs to the acetylglutamate kinase family. ArgB subfamily.

Its subcellular location is the cytoplasm. The catalysed reaction is N-acetyl-L-glutamate + ATP = N-acetyl-L-glutamyl 5-phosphate + ADP. It participates in amino-acid biosynthesis; L-arginine biosynthesis; N(2)-acetyl-L-ornithine from L-glutamate: step 2/4. In terms of biological role, catalyzes the ATP-dependent phosphorylation of N-acetyl-L-glutamate. The sequence is that of Acetylglutamate kinase from Halorhodospira halophila (strain DSM 244 / SL1) (Ectothiorhodospira halophila (strain DSM 244 / SL1)).